Consider the following 226-residue polypeptide: Cytidylate kinase (226 aa).

An ATP-binding site is contributed by 11-19; the sequence is GPASAGKST.

This sequence belongs to the cytidylate kinase family. Type 1 subfamily.

The protein localises to the cytoplasm. The catalysed reaction is CMP + ATP = CDP + ADP. It catalyses the reaction dCMP + ATP = dCDP + ADP. The polypeptide is Cytidylate kinase (Pediococcus pentosaceus (strain ATCC 25745 / CCUG 21536 / LMG 10740 / 183-1w)).